We begin with the raw amino-acid sequence, 233 residues long: H-2 class II histocompatibility antigen, A-R alpha chain (233 aa).

The alpha-1 stretch occupies residues 1–88 (EDDIEADHVG…KRSNFTPAAN (88 aa)). Over 1–195 (EDDIEADHVG…IPAPMSELTE (195 aa)) the chain is Extracellular. An alpha-2 region spans residues 89-182 (EAPQATVFPK…GLEEPVLKHW (94 aa)). Positions 91 to 183 (PQATVFPKSP…LEEPVLKHWE (93 aa)) constitute an Ig-like C1-type domain. Residues Cys111 and Cys167 are joined by a disulfide bond. An N-linked (GlcNAc...) asparagine glycan is attached at Asn122. Residues 183–195 (EPEIPAPMSELTE) are connecting peptide. Residues 196–221 (TVVCALGLSVGLVGIVVGTIFIIQGL) traverse the membrane as a helical segment. The Cytoplasmic portion of the chain corresponds to 222 to 233 (RSGGTSRHPGPL).

This sequence belongs to the MHC class II family.

It localises to the membrane. The polypeptide is H-2 class II histocompatibility antigen, A-R alpha chain (H2-Aa) (Mus musculus (Mouse)).